The primary structure comprises 74 residues: Translation initiation factor IF-1 (74 aa).

One can recognise an S1-like domain in the interval methionine 1–arginine 72.

This sequence belongs to the IF-1 family. As to quaternary structure, component of the 30S ribosomal translation pre-initiation complex which assembles on the 30S ribosome in the order IF-2 and IF-3, IF-1 and N-formylmethionyl-tRNA(fMet); mRNA recruitment can occur at any time during PIC assembly.

The protein localises to the cytoplasm. Its function is as follows. One of the essential components for the initiation of protein synthesis. Stabilizes the binding of IF-2 and IF-3 on the 30S subunit to which N-formylmethionyl-tRNA(fMet) subsequently binds. Helps modulate mRNA selection, yielding the 30S pre-initiation complex (PIC). Upon addition of the 50S ribosomal subunit IF-1, IF-2 and IF-3 are released leaving the mature 70S translation initiation complex. This is Translation initiation factor IF-1 from Trichodesmium erythraeum (strain IMS101).